The primary structure comprises 408 residues: L,D-transpeptidase 2 (408 aa).

The signal sequence occupies residues 1–34; the sequence is MPKVGIAAQAGRTRVRRAWLTALMMTAVMIGAVA. Cysteine 35 carries the N-palmitoyl cysteine lipid modification. Cysteine 35 is lipidated: S-diacylglycerol cysteine. Aspartate 232, glutamate 235, and glycine 236 together coordinate Ca(2+). In terms of domain architecture, L,D-TPase catalytic spans 253-378; sequence VIATADDNTK…VKRGDIVEVV (126 aa). Substrate contacts are provided by residues tyrosine 318 and 331-332; that span reads SG. Residue histidine 336 is the Proton donor/acceptor of the active site. Catalysis depends on cysteine 354, which acts as the Nucleophile. Substrate is bound at residue asparagine 356.

As to quaternary structure, monomer.

The protein localises to the cell membrane. Its pathway is cell wall biogenesis; peptidoglycan biosynthesis. With respect to regulation, is irreversibly inactivated by the beta-lactams carbapenems via the formation of a covalent adduct resulting from acylation of the catalytic Cys. Generates 3-&gt;3 cross-links in peptidoglycan, catalyzing the cleavage of the mDap(3)-D-Ala(4) bond of a tetrapeptide donor stem and the formation of a bond between the carbonyl of mDap(3) of the donor stem and the side chain of mDap(3) of the acceptor stem. Is specific for donor substrates containing a stem tetrapeptide since it cannot use pentapeptide stems. Is essential for virulence in a mouse model of acute infection. The sequence is that of L,D-transpeptidase 2 (ldtB) from Mycobacterium tuberculosis (strain CDC 1551 / Oshkosh).